Reading from the N-terminus, the 485-residue chain is Cytosol non-specific dipeptidase (485 aa).

Zn(2+) is bound at residue H76. D78 is an active-site residue. D115 lines the Zn(2+) pocket. The active-site Proton acceptor is E145. Zn(2+) contacts are provided by E146 and D169. K296 carries the post-translational modification N6-acetyllysine. A Zn(2+)-binding site is contributed by H457.

The protein belongs to the peptidase M20C family. Requires Zn(2+) as cofactor. Co(2+) serves as cofactor.

The catalysed reaction is Hydrolysis of dipeptides, preferentially hydrophobic dipeptides including prolyl amino acids.. Inhibited by metal chelators. Dipeptidase with broad substrate specificity. Requires dipeptide substrates with an unblocked N-terminus and the amino group in the alpha or beta position. Non-protein amino acids and proline are not accepted in the C-terminal position, whereas some dipeptide amides and formyl amino acids are hydrolyzed. Also shows cysteinylglycinase activity, which is sufficient for E.coli to utilize cysteinylglycine as a cysteine source. This is Cytosol non-specific dipeptidase (pepD) from Escherichia coli (strain K12).